Here is a 315-residue protein sequence, read N- to C-terminus: Spermidine synthase 1 (315 aa).

The 238-residue stretch at 25–262 folds into the PABS domain; the sequence is PGWFSEISPL…GMIGFMLCST (238 aa). Residue Gln56 coordinates S-adenosyl 3-(methylsulfanyl)propylamine. Tyr86 is a binding site for putrescine. S-adenosyl 3-(methylsulfanyl)propylamine-binding positions include Gln87, Asp111, Glu131, 162–163, and Asp181; that span reads DG. Asp181 acts as the Proton acceptor in catalysis. Putrescine contacts are provided by residues 181-184 and Tyr250; that span reads DSSD.

This sequence belongs to the spermidine/spermine synthase family.

It carries out the reaction S-adenosyl 3-(methylsulfanyl)propylamine + putrescine = S-methyl-5'-thioadenosine + spermidine + H(+). It functions in the pathway amine and polyamine biosynthesis; spermidine biosynthesis; spermidine from putrescine: step 1/1. The polypeptide is Spermidine synthase 1 (Hyoscyamus niger (Black henbane)).